A 269-amino-acid chain; its full sequence is Formamidopyrimidine-DNA glycosylase (269 aa).

P2 acts as the Schiff-base intermediate with DNA in catalysis. Catalysis depends on E3, which acts as the Proton donor. Residue K57 is the Proton donor; for beta-elimination activity of the active site. H90, R109, and R150 together coordinate DNA. The FPG-type zinc-finger motif lies at Q235–K269. R259 (proton donor; for delta-elimination activity) is an active-site residue.

The protein belongs to the FPG family. In terms of assembly, monomer. Zn(2+) serves as cofactor.

It catalyses the reaction Hydrolysis of DNA containing ring-opened 7-methylguanine residues, releasing 2,6-diamino-4-hydroxy-5-(N-methyl)formamidopyrimidine.. The catalysed reaction is 2'-deoxyribonucleotide-(2'-deoxyribose 5'-phosphate)-2'-deoxyribonucleotide-DNA = a 3'-end 2'-deoxyribonucleotide-(2,3-dehydro-2,3-deoxyribose 5'-phosphate)-DNA + a 5'-end 5'-phospho-2'-deoxyribonucleoside-DNA + H(+). Involved in base excision repair of DNA damaged by oxidation or by mutagenic agents. Acts as a DNA glycosylase that recognizes and removes damaged bases. Has a preference for oxidized purines, such as 7,8-dihydro-8-oxoguanine (8-oxoG). Has AP (apurinic/apyrimidinic) lyase activity and introduces nicks in the DNA strand. Cleaves the DNA backbone by beta-delta elimination to generate a single-strand break at the site of the removed base with both 3'- and 5'-phosphates. This chain is Formamidopyrimidine-DNA glycosylase, found in Salmonella arizonae (strain ATCC BAA-731 / CDC346-86 / RSK2980).